The primary structure comprises 69 residues: ATP synthase F(0) complex subunit 8 (69 aa).

Residues 8–24 (TWLLTITLMILALFCIY) traverse the membrane as a helical segment. Position 55 is an N6-acetyllysine; alternate (lysine 55). Position 55 is an N6-succinyllysine; alternate (lysine 55). Lysine 58 bears the N6-acetyllysine mark.

This sequence belongs to the ATPase protein 8 family. In terms of assembly, component of the ATP synthase complex composed at least of ATP5F1A/subunit alpha, ATP5F1B/subunit beta, ATP5MC1/subunit c (homooctomer), MT-ATP6/subunit a, MT-ATP8/subunit 8, ATP5ME/subunit e, ATP5MF/subunit f, ATP5MG/subunit g, ATP5MK/subunit k, ATP5MJ/subunit j, ATP5F1C/subunit gamma, ATP5F1D/subunit delta, ATP5F1E/subunit epsilon, ATP5PF/subunit F6, ATP5PB/subunit b, ATP5PD/subunit d, ATP5PO/subunit OSCP. ATP synthase complex consists of a soluble F(1) head domain (subunits alpha(3) and beta(3)) - the catalytic core - and a membrane F(0) domain - the membrane proton channel (subunits c, a, 8, e, f, g, k and j). These two domains are linked by a central stalk (subunits gamma, delta, and epsilon) rotating inside the F1 region and a stationary peripheral stalk (subunits F6, b, d, and OSCP). Interacts with PRICKLE3.

The protein resides in the mitochondrion membrane. Its function is as follows. Subunit 8, of the mitochondrial membrane ATP synthase complex (F(1)F(0) ATP synthase or Complex V) that produces ATP from ADP in the presence of a proton gradient across the membrane which is generated by electron transport complexes of the respiratory chain. ATP synthase complex consist of a soluble F(1) head domain - the catalytic core - and a membrane F(1) domain - the membrane proton channel. These two domains are linked by a central stalk rotating inside the F(1) region and a stationary peripheral stalk. During catalysis, ATP synthesis in the catalytic domain of F(1) is coupled via a rotary mechanism of the central stalk subunits to proton translocation. In vivo, can only synthesize ATP although its ATP hydrolase activity can be activated artificially in vitro. Part of the complex F(0) domain. The sequence is that of ATP synthase F(0) complex subunit 8 from Osphranter robustus (Wallaroo).